We begin with the raw amino-acid sequence, 1152 residues long: ATP-dependent helicase/deoxyribonuclease subunit B (1152 aa).

A UvrD-like helicase ATP-binding domain is found at Met-1 to Arg-338. Gly-8–Ser-15 is a binding site for ATP. A UvrD-like helicase C-terminal domain is found at Pro-276–Gly-579. Residues Cys-785, Cys-1106, Cys-1109, and Cys-1115 each coordinate [4Fe-4S] cluster.

It belongs to the helicase family. AddB/RexB type 1 subfamily. As to quaternary structure, heterodimer of AddA and AddB. It depends on Mg(2+) as a cofactor. The cofactor is [4Fe-4S] cluster.

Functionally, the heterodimer acts as both an ATP-dependent DNA helicase and an ATP-dependent, dual-direction single-stranded exonuclease. Recognizes the chi site generating a DNA molecule suitable for the initiation of homologous recombination. The AddB subunit has 5' -&gt; 3' nuclease activity but not helicase activity. The protein is ATP-dependent helicase/deoxyribonuclease subunit B of Clostridium botulinum (strain Alaska E43 / Type E3).